The following is a 476-amino-acid chain: MASPTASSILQYSGTGQKEKGTLDHGDVPSVDIGKGETKEVFQENVDGVEFRTVSWQRATVVFLKINFAMSILAIPAALGALGSIGGSLCIIGYTSLNVYTGLILGDIKHNHTECHTLADMMGLIWGRWGRELVGVQIIIAQTLVTAGGVVAITIGFNALSDHGTCTVAFGLISAIAVTAFSAIRTFSKLGWLTWIGFITFVIGVFIFVVAVTQVDRPAAAPQTGDFDLGWAPIAYPSFVVGMVSVTNIFISTCGSSNFIPVISEMKRPQDYRKACLVAGFIVGAMYLSFSLVIYRYCGVWLSTPAFASAGPIVKKVAYGVSLPGLILGVGIYQHVAAKYAFVRVLRDSKHLQANTFTHWGTWLGINIALGTAAFIVAEAVPILNYLLGLAGAICLAPFSLIFPALLWMHEFKKYKTGTTTQKVKYSFHVLIMMFGFFMMIAGFYSVVVLIKEAFDTGTIAKVFDCADNSGFVQGK.

The chain crosses the membrane as a helical span at residues isoleucine 72–isoleucine 92. Asparagine 111 carries an N-linked (GlcNAc...) asparagine glycan. Helical transmembrane passes span leucine 133–isoleucine 153, glycine 164–isoleucine 184, tryptophan 192–valine 212, tryptophan 231–isoleucine 251, alanine 275–tyrosine 295, valine 317–alanine 337, leucine 364–leucine 384, leucine 387–leucine 407, and leucine 431–isoleucine 451.

This sequence belongs to the amino acid/polyamine transporter 2 family.

Its subcellular location is the membrane. Functionally, transmembrane transporter; part of the Fusarium detoxification of benzoxazolinone cluster involved in the degradation of benzoxazolinones produced by the host plant. Maize, wheat, and rye produce the 2 benzoxazinone phytoanticipins 2,4-dihy-droxy-7-methoxy-1,4-benzoxazin-3-one (DIMBOA) and 2,4-dihydroxy-1,4-benzoxazin-3-one (DIBOA) that, due to their inherent instability once released, spontaneously degrade to the more stable corresponding benzoxazolinones, 6-methoxy-2-benzoxazolinone (MBOA) and 2-benzoxazolinone (BOA), respectively. FPSE_08127 is proposed to shuttle metabolites of benzoxazolinone degradation. The sequence is that of Transmembrane transporter FPSE_08127 from Fusarium pseudograminearum (strain CS3096) (Wheat and barley crown-rot fungus).